The chain runs to 301 residues: Polyamine aminopropyltransferase (301 aa).

Residues 4–240 (WHWLLEWQTP…GLWGFVYGGV (237 aa)) form the PABS domain. An S-methyl-5'-thioadenosine-binding site is contributed by Gln33. Spermidine is bound by residues His64 and Glu89. S-methyl-5'-thioadenosine is bound by residues Asp109 and 141–142 (DG). The Proton acceptor role is filled by Asp159.

This sequence belongs to the spermidine/spermine synthase family. As to quaternary structure, homotrimer.

It is found in the cytoplasm. The enzyme catalyses S-adenosyl 3-(methylsulfanyl)propylamine + putrescine = S-methyl-5'-thioadenosine + spermidine + H(+). The catalysed reaction is S-adenosyl 3-(methylsulfanyl)propylamine + propane-1,3-diamine = norspermidine + S-methyl-5'-thioadenosine + H(+). It catalyses the reaction norspermidine + S-adenosyl 3-(methylsulfanyl)propylamine = norspermine + S-methyl-5'-thioadenosine + H(+). It carries out the reaction S-adenosyl 3-(methylsulfanyl)propylamine + spermidine = thermospermine + S-methyl-5'-thioadenosine + H(+). It functions in the pathway amine and polyamine biosynthesis; spermidine biosynthesis; spermidine from putrescine: step 1/1. With respect to regulation, competitively inhibited by 5-methylthioadenosine, 5-methylthiotubercidin, S-adenosyl(5)-3-thiopropylamine and S-adenosyl-3-thio-l,8-diaminooctane. Involved in the biosynthesis of polyamines which are thought to support the growth of thermophilic microorganisms under high-temperature conditions. It seems that long-chain and branched-chain of polyamines effectively stabilize DNA and RNA, respectively. Catalyzes the irreversible transfer of a propylamine group from the amino donor S-adenosylmethioninamine (decarboxy-AdoMet) to various amine acceptors such as putrescine (1,4-diaminobutane), 1,3-diaminopropane, sym-norspermidine and spermidine. The biosynthesis of caldopentamine from norspermine has been also observed, but with a very low activity. The reaction involves a nucleophilic attack on the C-3 methylene of the propylamine moiety adjacent to the positively charged sulfur of decarboxy-AdoMet. S-adenosylmethioninamine is the only amino donor. The sequence is that of Polyamine aminopropyltransferase from Saccharolobus solfataricus (strain ATCC 35092 / DSM 1617 / JCM 11322 / P2) (Sulfolobus solfataricus).